A 159-amino-acid polypeptide reads, in one-letter code: 16 kDa outer membrane lipoprotein (159 aa).

The first 21 residues, 1–21 (MNKKIFTLFLVVAASAIFAVS), serve as a signal peptide directing secretion. The N-palmitoyl cysteine moiety is linked to residue Cys22. Cys22 carries S-diacylglycerol cysteine lipidation.

It is found in the cell outer membrane. The sequence is that of 16 kDa outer membrane lipoprotein (smpA) from Brachyspira hyodysenteriae (Treponema hyodysenteriae).